Here is a 524-residue protein sequence, read N- to C-terminus: MDPRELAERLTERDLRILIHLAESGEATPEELAESLDVDLGPVMRSLYWLEERGLIESEEETHEVYELGDEGKEYAEEGLPELRIVEVLRKIGGEGRLEEVLDRAGVPRKLAGPVLGWLRRKGLAEIKREDGETSLVLLEEEPEDVDQSVLEALAAEGSASVEELARKLEMDEEEVEKALKRLSERGDVLRAREETVKKVRLTERGEEVAEHAPEVLERDWITELKPEHLREGTWKEKEFKPYDVKAPTSPTFPGKRHPLKEVINEIRRIFLEMGFVEVSGPLVESSFWNFDALFQPQDHAAREMQDTFYLKEPAEAELPDEEVVEKVRAVHEDGGDTGSRGWGYEWDEGVARKTVLRTHTTAVSVRKLYEVEGPPLKAFSIGRVYRRETVDYKHLPEFHQCEGIVLAKDVSFRDLLGILEEFYRRMGFEEVRFRPAYFPYTVLSVEPEVYFEEKGDWVELGGAGIFRPEVLQPLGFDPDVVCLAWGLGVERLAMLKLGIDDIRDLYMSDLKTLLELPTARARR.

Thr-362, Tyr-441, and Phe-467 together coordinate L-phenylalanine.

It belongs to the class-II aminoacyl-tRNA synthetase family. Phe-tRNA synthetase alpha subunit type 2 subfamily. Tetramer of two alpha and two beta subunits. It depends on Mg(2+) as a cofactor.

It localises to the cytoplasm. The catalysed reaction is tRNA(Phe) + L-phenylalanine + ATP = L-phenylalanyl-tRNA(Phe) + AMP + diphosphate + H(+). This is Phenylalanine--tRNA ligase alpha subunit from Methanopyrus kandleri (strain AV19 / DSM 6324 / JCM 9639 / NBRC 100938).